Consider the following 279-residue polypeptide: Phosphatidylglycerol--prolipoprotein diacylglyceryl transferase (279 aa).

A run of 3 helical transmembrane segments spans residues 18 to 38 (LSVR…YFVA), 55 to 75 (IIFY…VIFQ), and 89 to 109 (IWHG…AGVI). An a 1,2-diacyl-sn-glycero-3-phospho-(1'-sn-glycerol)-binding site is contributed by R137. 2 helical membrane passes run 203-223 (LGET…FIEG) and 235-255 (IRVA…LIVY).

The protein belongs to the Lgt family.

It localises to the cell membrane. It carries out the reaction L-cysteinyl-[prolipoprotein] + a 1,2-diacyl-sn-glycero-3-phospho-(1'-sn-glycerol) = an S-1,2-diacyl-sn-glyceryl-L-cysteinyl-[prolipoprotein] + sn-glycerol 1-phosphate + H(+). It functions in the pathway protein modification; lipoprotein biosynthesis (diacylglyceryl transfer). Its function is as follows. Catalyzes the transfer of the diacylglyceryl group from phosphatidylglycerol to the sulfhydryl group of the N-terminal cysteine of a prolipoprotein, the first step in the formation of mature lipoproteins. The sequence is that of Phosphatidylglycerol--prolipoprotein diacylglyceryl transferase from Staphylococcus aureus (strain MSSA476).